A 503-amino-acid chain; its full sequence is Cobyric acid synthase (503 aa).

Residues 251–450 form the GATase cobBQ-type domain; that stretch reads DLDIAVIRLP…IHGIFENAAF (200 aa). C331 acts as the Nucleophile in catalysis. The active site involves H442.

It belongs to the CobB/CobQ family. CobQ subfamily.

Its pathway is cofactor biosynthesis; adenosylcobalamin biosynthesis. Catalyzes amidations at positions B, D, E, and G on adenosylcobyrinic A,C-diamide. NH(2) groups are provided by glutamine, and one molecule of ATP is hydrogenolyzed for each amidation. In Dehalococcoides mccartyi (strain ATCC BAA-2100 / JCM 16839 / KCTC 5957 / BAV1), this protein is Cobyric acid synthase.